Consider the following 134-residue polypeptide: Aspartate 1-decarboxylase (134 aa).

S25 serves as the catalytic Schiff-base intermediate with substrate; via pyruvic acid. S25 carries the post-translational modification Pyruvic acid (Ser). Substrate is bound at residue T57. The Proton donor role is filled by Y58. G73 to A75 is a substrate binding site.

It belongs to the PanD family. Heterooctamer of four alpha and four beta subunits. Pyruvate is required as a cofactor. Post-translationally, is synthesized initially as an inactive proenzyme, which is activated by self-cleavage at a specific serine bond to produce a beta-subunit with a hydroxyl group at its C-terminus and an alpha-subunit with a pyruvoyl group at its N-terminus.

The protein localises to the cytoplasm. The enzyme catalyses L-aspartate + H(+) = beta-alanine + CO2. Its pathway is cofactor biosynthesis; (R)-pantothenate biosynthesis; beta-alanine from L-aspartate: step 1/1. In terms of biological role, catalyzes the pyruvoyl-dependent decarboxylation of aspartate to produce beta-alanine. The chain is Aspartate 1-decarboxylase from Mycolicibacterium gilvum (strain PYR-GCK) (Mycobacterium gilvum (strain PYR-GCK)).